We begin with the raw amino-acid sequence, 351 residues long: Dihydroorotate dehydrogenase (quinone) (351 aa).

FMN contacts are provided by residues 61-65 (AGLDK) and Thr85. Lys65 is a binding site for substrate. Residue 110 to 114 (NRMGF) participates in substrate binding. FMN contacts are provided by Asn139 and Asn172. Asn172 serves as a coordination point for substrate. Ser175 functions as the Nucleophile in the catalytic mechanism. Asn177 lines the substrate pocket. 2 residues coordinate FMN: Lys217 and Thr245. 246 to 247 (NT) provides a ligand contact to substrate. FMN contacts are provided by residues Gly268, Gly297, and 318–319 (YT).

The protein belongs to the dihydroorotate dehydrogenase family. Type 2 subfamily. Monomer. The cofactor is FMN.

The protein localises to the cell membrane. The enzyme catalyses (S)-dihydroorotate + a quinone = orotate + a quinol. It functions in the pathway pyrimidine metabolism; UMP biosynthesis via de novo pathway; orotate from (S)-dihydroorotate (quinone route): step 1/1. Its function is as follows. Catalyzes the conversion of dihydroorotate to orotate with quinone as electron acceptor. The polypeptide is Dihydroorotate dehydrogenase (quinone) (Xylella fastidiosa (strain 9a5c)).